Reading from the N-terminus, the 443-residue chain is Ribosomal protein uS12 methylthiotransferase RimO (443 aa).

The region spanning 10-120 (PRVGFVSLGC…VVKAVHQHLP (111 aa)) is the MTTase N-terminal domain. Residues Cys19, Cys55, Cys84, Cys151, Cys155, and Cys158 each coordinate [4Fe-4S] cluster. The Radical SAM core domain maps to 137–375 (LTPAHYAYLK…DFQEDISTQR (239 aa)). The 67-residue stretch at 377–443 (ERWIGRDITV…VHDLYARPLP (67 aa)) folds into the TRAM domain.

This sequence belongs to the methylthiotransferase family. RimO subfamily. It depends on [4Fe-4S] cluster as a cofactor.

It localises to the cytoplasm. The catalysed reaction is L-aspartate(89)-[ribosomal protein uS12]-hydrogen + (sulfur carrier)-SH + AH2 + 2 S-adenosyl-L-methionine = 3-methylsulfanyl-L-aspartate(89)-[ribosomal protein uS12]-hydrogen + (sulfur carrier)-H + 5'-deoxyadenosine + L-methionine + A + S-adenosyl-L-homocysteine + 2 H(+). Catalyzes the methylthiolation of an aspartic acid residue of ribosomal protein uS12. The sequence is that of Ribosomal protein uS12 methylthiotransferase RimO from Aromatoleum aromaticum (strain DSM 19018 / LMG 30748 / EbN1) (Azoarcus sp. (strain EbN1)).